We begin with the raw amino-acid sequence, 318 residues long: NAD(P)H-dependent D-xylose reductase (318 aa).

Tyr-48 (proton donor) is an active-site residue. His-110 contributes to the substrate binding site. Residues Ser-165–Asn-166, Ser-214–Glu-223, and Lys-270–Asn-280 contribute to the NAD(+) site.

This sequence belongs to the aldo/keto reductase family.

It carries out the reaction xylitol + NAD(+) = D-xylose + NADH + H(+). The enzyme catalyses xylitol + NADP(+) = D-xylose + NADPH + H(+). It functions in the pathway carbohydrate metabolism; D-xylose degradation. With respect to regulation, NADP(+) is a potent inhibitor of both the NADPH- and NADH-linked xylose reduction, whereas NAD(+) showS strong inhibition only with the NADH-linked reaction. Reduces D-xylose into xylitol. Has a preference for NADPH, but can also utilize NADH as cosubstrate. This chain is NAD(P)H-dependent D-xylose reductase (XYL1), found in Scheffersomyces stipitis (strain ATCC 58785 / CBS 6054 / NBRC 10063 / NRRL Y-11545) (Yeast).